We begin with the raw amino-acid sequence, 196 residues long: Large ribosomal subunit protein eL15 (196 aa).

The segment at 154 to 196 (PGHRGRSERGLTSAGVKGRGMRRRGKGTEKCRPSVRANANRAK) is disordered.

This sequence belongs to the eukaryotic ribosomal protein eL15 family.

In Methanospirillum hungatei JF-1 (strain ATCC 27890 / DSM 864 / NBRC 100397 / JF-1), this protein is Large ribosomal subunit protein eL15.